A 622-amino-acid chain; its full sequence is Elongation factor 4 (622 aa).

The tr-type G domain maps to 17–198 (ELLRNFCIIA…QIVRQIPAPV (182 aa)). GTP is bound by residues 29–34 (DHGKST) and 145–148 (NKID).

The protein belongs to the TRAFAC class translation factor GTPase superfamily. Classic translation factor GTPase family. LepA subfamily.

The protein localises to the cell membrane. It carries out the reaction GTP + H2O = GDP + phosphate + H(+). Its function is as follows. Required for accurate and efficient protein synthesis under certain stress conditions. May act as a fidelity factor of the translation reaction, by catalyzing a one-codon backward translocation of tRNAs on improperly translocated ribosomes. Back-translocation proceeds from a post-translocation (POST) complex to a pre-translocation (PRE) complex, thus giving elongation factor G a second chance to translocate the tRNAs correctly. Binds to ribosomes in a GTP-dependent manner. This chain is Elongation factor 4, found in Kineococcus radiotolerans (strain ATCC BAA-149 / DSM 14245 / SRS30216).